The primary structure comprises 393 residues: MSLSLKRKDLMIVNMGPQHPSMHGVLRLIVTLDGEDVIDCEPILGYLHRGMEKIAENRSIIQYLPYVTRWDYLATMFTEAITVNAPEFLENIQIPKRASYIRVIMLELSRIASHLLWLGPFMADLGAQTPFFYIFRERELIYDLFEAVTGMRMMHNYFRIGGVAADLPYGWMDKCLDFCDYFLQGVVEYQELITQNPIFLERVEGVGFISGEEAVNWGLSGPMLRASGIQWDLRKIDPYESYNQFDWKVQWQKEGDSLARYLVRVGEMRESIKIIQQAVEKIPGGPYENLEARRFKKAKNPEWNDFEYRFLGKKPSPNFELSKQELYVRVEAPKGELGIYLVGDDSLFPWRWKIRPPGFINLQILPQLVKKMKLADIMTILGSIDIIMGEVDR.

The protein belongs to the complex I 49 kDa subunit family. As to quaternary structure, NDH is composed of at least 16 different subunits, 5 of which are encoded in the nucleus.

The protein resides in the plastid. It localises to the chloroplast thylakoid membrane. It carries out the reaction a plastoquinone + NADH + (n+1) H(+)(in) = a plastoquinol + NAD(+) + n H(+)(out). The catalysed reaction is a plastoquinone + NADPH + (n+1) H(+)(in) = a plastoquinol + NADP(+) + n H(+)(out). Functionally, NDH shuttles electrons from NAD(P)H:plastoquinone, via FMN and iron-sulfur (Fe-S) centers, to quinones in the photosynthetic chain and possibly in a chloroplast respiratory chain. The immediate electron acceptor for the enzyme in this species is believed to be plastoquinone. Couples the redox reaction to proton translocation, and thus conserves the redox energy in a proton gradient. The chain is NAD(P)H-quinone oxidoreductase subunit H, chloroplastic from Zea mays (Maize).